Consider the following 346-residue polypeptide: Holliday junction branch migration complex subunit RuvB (346 aa).

Positions 1 to 183 are large ATPase domain (RuvB-L); it reads MTEQRIIASS…FGIVQRLEFY (183 aa). ATP-binding positions include Ile-22, Arg-23, Gly-64, Lys-67, Thr-68, Thr-69, 130–132, Arg-173, Tyr-183, and Arg-220; that span reads EDF. A Mg(2+)-binding site is contributed by Thr-68. A small ATPAse domain (RuvB-S) region spans residues 184–254; the sequence is SPQELTRIVS…VAQAAMQMLK (71 aa). Positions 257–346 are head domain (RuvB-H); sequence PEGFDELDRR…PGIGEPGDLF (90 aa). DNA contacts are provided by Arg-293, Arg-312, and Arg-317.

The protein belongs to the RuvB family. In terms of assembly, homohexamer. Forms an RuvA(8)-RuvB(12)-Holliday junction (HJ) complex. HJ DNA is sandwiched between 2 RuvA tetramers; dsDNA enters through RuvA and exits via RuvB. An RuvB hexamer assembles on each DNA strand where it exits the tetramer. Each RuvB hexamer is contacted by two RuvA subunits (via domain III) on 2 adjacent RuvB subunits; this complex drives branch migration. In the full resolvosome a probable DNA-RuvA(4)-RuvB(12)-RuvC(2) complex forms which resolves the HJ.

It is found in the cytoplasm. It catalyses the reaction ATP + H2O = ADP + phosphate + H(+). The RuvA-RuvB-RuvC complex processes Holliday junction (HJ) DNA during genetic recombination and DNA repair, while the RuvA-RuvB complex plays an important role in the rescue of blocked DNA replication forks via replication fork reversal (RFR). RuvA specifically binds to HJ cruciform DNA, conferring on it an open structure. The RuvB hexamer acts as an ATP-dependent pump, pulling dsDNA into and through the RuvAB complex. RuvB forms 2 homohexamers on either side of HJ DNA bound by 1 or 2 RuvA tetramers; 4 subunits per hexamer contact DNA at a time. Coordinated motions by a converter formed by DNA-disengaged RuvB subunits stimulates ATP hydrolysis and nucleotide exchange. Immobilization of the converter enables RuvB to convert the ATP-contained energy into a lever motion, pulling 2 nucleotides of DNA out of the RuvA tetramer per ATP hydrolyzed, thus driving DNA branch migration. The RuvB motors rotate together with the DNA substrate, which together with the progressing nucleotide cycle form the mechanistic basis for DNA recombination by continuous HJ branch migration. Branch migration allows RuvC to scan DNA until it finds its consensus sequence, where it cleaves and resolves cruciform DNA. This chain is Holliday junction branch migration complex subunit RuvB, found in Xanthomonas euvesicatoria pv. vesicatoria (strain 85-10) (Xanthomonas campestris pv. vesicatoria).